The following is a 49-amino-acid chain: Large ribosomal subunit protein bL33 (49 aa).

The protein belongs to the bacterial ribosomal protein bL33 family.

This Clostridium perfringens (strain ATCC 13124 / DSM 756 / JCM 1290 / NCIMB 6125 / NCTC 8237 / Type A) protein is Large ribosomal subunit protein bL33.